A 249-amino-acid chain; its full sequence is 2,3-bisphosphoglycerate-dependent phosphoglycerate mutase (249 aa).

Substrate-binding positions include 9-16 (RHGESEWN), 22-23 (TG), arginine 61, 88-91 (ERHY), lysine 99, 115-116 (RR), and 184-185 (GN). Histidine 10 acts as the Tele-phosphohistidine intermediate in catalysis. The Proton donor/acceptor role is filled by glutamate 88.

It belongs to the phosphoglycerate mutase family. BPG-dependent PGAM subfamily.

It catalyses the reaction (2R)-2-phosphoglycerate = (2R)-3-phosphoglycerate. It participates in carbohydrate degradation; glycolysis; pyruvate from D-glyceraldehyde 3-phosphate: step 3/5. Catalyzes the interconversion of 2-phosphoglycerate and 3-phosphoglycerate. The polypeptide is 2,3-bisphosphoglycerate-dependent phosphoglycerate mutase (Cutibacterium acnes (strain DSM 16379 / KPA171202) (Propionibacterium acnes)).